A 127-amino-acid polypeptide reads, in one-letter code: UPF0102 protein ERGA_CDS_00540 (127 aa).

The protein belongs to the UPF0102 family.

This is UPF0102 protein ERGA_CDS_00540 from Ehrlichia ruminantium (strain Gardel).